Consider the following 831-residue polypeptide: Protein translocase subunit SecA (831 aa).

Residues glutamine 88, 106–110 (GEGKT), and aspartate 495 each bind ATP. Zn(2+) is bound by residues cysteine 816, cysteine 818, cysteine 827, and cysteine 828.

It belongs to the SecA family. In terms of assembly, monomer and homodimer. Part of the essential Sec protein translocation apparatus which comprises SecA, SecYEG and auxiliary proteins SecDF-YajC and YidC. Zn(2+) serves as cofactor.

It is found in the cell membrane. The protein resides in the cytoplasm. It carries out the reaction ATP + H2O + cellular proteinSide 1 = ADP + phosphate + cellular proteinSide 2.. Part of the Sec protein translocase complex. Interacts with the SecYEG preprotein conducting channel. Has a central role in coupling the hydrolysis of ATP to the transfer of proteins into and across the cell membrane, serving as an ATP-driven molecular motor driving the stepwise translocation of polypeptide chains across the membrane. The sequence is that of Protein translocase subunit SecA from Lawsonia intracellularis (strain PHE/MN1-00).